Reading from the N-terminus, the 256-residue chain is 5-keto-4-deoxy-D-glucarate aldolase (256 aa).

The active-site Proton acceptor is the H50. Position 151 (Q151) interacts with substrate. A Mg(2+)-binding site is contributed by E153. Residues S178 and D179 each contribute to the substrate site. D179 lines the Mg(2+) pocket.

This sequence belongs to the HpcH/HpaI aldolase family. KDGluc aldolase subfamily. Homohexamer; trimer of dimers. Requires Mg(2+) as cofactor.

It catalyses the reaction 5-dehydro-4-deoxy-D-glucarate = 2-hydroxy-3-oxopropanoate + pyruvate. The catalysed reaction is 2-dehydro-3-deoxy-D-glucarate = 2-hydroxy-3-oxopropanoate + pyruvate. The protein operates within carbohydrate acid metabolism; galactarate degradation; D-glycerate from galactarate: step 2/3. Functionally, catalyzes the reversible retro-aldol cleavage of both 5-keto-4-deoxy-D-glucarate and 2-keto-3-deoxy-D-glucarate to pyruvate and tartronic semialdehyde. In Salmonella paratyphi C (strain RKS4594), this protein is 5-keto-4-deoxy-D-glucarate aldolase.